The primary structure comprises 369 residues: Aspartate-semialdehyde dehydrogenase (369 aa).

NADP(+) contacts are provided by residues 11–14 (RGMV), 38–39 (TS), and Gln75. Arg104 contributes to the phosphate binding site. Residue Cys137 is the Acyl-thioester intermediate of the active site. Residue Gln164 participates in substrate binding. NADP(+) is bound by residues 167-168 (SG) and Pro195. Glu243 serves as a coordination point for substrate. Residue Lys246 participates in phosphate binding. Residue Arg269 coordinates substrate. The active-site Proton acceptor is His276. Gln352 contacts NADP(+).

The protein belongs to the aspartate-semialdehyde dehydrogenase family. In terms of assembly, homodimer.

It carries out the reaction L-aspartate 4-semialdehyde + phosphate + NADP(+) = 4-phospho-L-aspartate + NADPH + H(+). Its pathway is amino-acid biosynthesis; L-lysine biosynthesis via DAP pathway; (S)-tetrahydrodipicolinate from L-aspartate: step 2/4. It functions in the pathway amino-acid biosynthesis; L-methionine biosynthesis via de novo pathway; L-homoserine from L-aspartate: step 2/3. The protein operates within amino-acid biosynthesis; L-threonine biosynthesis; L-threonine from L-aspartate: step 2/5. Functionally, catalyzes the NADPH-dependent formation of L-aspartate-semialdehyde (L-ASA) by the reductive dephosphorylation of L-aspartyl-4-phosphate. The polypeptide is Aspartate-semialdehyde dehydrogenase (Buchnera aphidicola subsp. Baizongia pistaciae (strain Bp)).